A 437-amino-acid polypeptide reads, in one-letter code: Serine hydroxymethyltransferase (437 aa).

(6S)-5,6,7,8-tetrahydrofolate-binding positions include leucine 130 and 134–136 (GHL). The residue at position 239 (lysine 239) is an N6-(pyridoxal phosphate)lysine.

It belongs to the SHMT family. As to quaternary structure, homodimer. It depends on pyridoxal 5'-phosphate as a cofactor.

The protein localises to the cytoplasm. It carries out the reaction (6R)-5,10-methylene-5,6,7,8-tetrahydrofolate + glycine + H2O = (6S)-5,6,7,8-tetrahydrofolate + L-serine. The protein operates within one-carbon metabolism; tetrahydrofolate interconversion. It participates in amino-acid biosynthesis; glycine biosynthesis; glycine from L-serine: step 1/1. Functionally, catalyzes the reversible interconversion of serine and glycine with tetrahydrofolate (THF) serving as the one-carbon carrier. This reaction serves as the major source of one-carbon groups required for the biosynthesis of purines, thymidylate, methionine, and other important biomolecules. Also exhibits THF-independent aldolase activity toward beta-hydroxyamino acids, producing glycine and aldehydes, via a retro-aldol mechanism. In Bartonella tribocorum (strain CIP 105476 / IBS 506), this protein is Serine hydroxymethyltransferase.